A 321-amino-acid polypeptide reads, in one-letter code: uncharacterized protein (321 aa).

ATP is bound at residue 28–35; the sequence is GPINSGKT.

It belongs to the archaeal ATPase family.

This is an uncharacterized protein from Pyrococcus horikoshii (strain ATCC 700860 / DSM 12428 / JCM 9974 / NBRC 100139 / OT-3).